Consider the following 125-residue polypeptide: Casein kinase I isoform alpha (125 aa).

The 125-residue stretch at 1–125 (GEEVAVKLES…LIDFGLAKKY (125 aa)) folds into the Protein kinase domain. Lysine 7 contributes to the ATP binding site. The active-site Proton acceptor is the aspartate 97.

It belongs to the protein kinase superfamily. CK1 Ser/Thr protein kinase family. Casein kinase I subfamily. Interacts with the Axin complex. Interacts with TUT1, leading to TUT1 phosphorylation. Interacts with FAM83A, FAM83B, FAM83C, FAM83D, FAM83E, FAM83F, FAM83G and FAM83H (via DUF1669). Interaction with FAM83H recruits CSNK1A1 to keratin filaments. Post-translationally, phosphorylated by MTOR in response to mitogenic stimulation, leading to its activation.

It is found in the cytoplasm. Its subcellular location is the cytoskeleton. The protein localises to the microtubule organizing center. The protein resides in the centrosome. It localises to the chromosome. It is found in the centromere. Its subcellular location is the kinetochore. The protein localises to the nucleus speckle. The protein resides in the cilium basal body. It localises to the spindle. It carries out the reaction L-seryl-[protein] + ATP = O-phospho-L-seryl-[protein] + ADP + H(+). It catalyses the reaction L-threonyl-[protein] + ATP = O-phospho-L-threonyl-[protein] + ADP + H(+). In terms of biological role, casein kinases are operationally defined by their preferential utilization of acidic proteins such as caseins as substrates. It can phosphorylate a large number of proteins. Participates in Wnt signaling. Phosphorylates CTNNB1 at 'Ser-45'. May phosphorylate PER1 and PER2. May play a role in segregating chromosomes during mitosis. May play a role in keratin cytoskeleton disassembly and thereby, it may regulate epithelial cell migration. Acts as a positive regulator of mTORC1 and mTORC2 signaling in response to nutrients by mediating phosphorylation of DEPTOR inhibitor. Acts as an inhibitor of NLRP3 inflammasome assembly by mediating phosphorylation of NLRP3. The polypeptide is Casein kinase I isoform alpha (CSNK1A1) (Sus scrofa (Pig)).